Here is an 89-residue protein sequence, read N- to C-terminus: Large ribosomal subunit protein bL27 (89 aa).

This sequence belongs to the bacterial ribosomal protein bL27 family.

In Ruegeria sp. (strain TM1040) (Silicibacter sp.), this protein is Large ribosomal subunit protein bL27.